Here is a 38-residue protein sequence, read N- to C-terminus: DNA binding protein VP8 (38 aa).

A compositionally biased stretch (basic residues) spans 1–16 (MKRKPMSRKASQKTFK). The segment at 1–38 (MKRKPMSRKASQKTFKKNTGVQRMNHLNPRAMRGGIRL) is disordered.

It belongs to the microviridae J protein family.

It is found in the virion. The protein resides in the host cytoplasm. In terms of biological role, mediates ssDNA packaging into virion, it locates to the internal surface of the capsid, thereby displacing the internal scaffolding protein VP3 during virion formation. Additionally, protein VP8 plays a role in viral attachment to the host cell. This Bdellovibrio phage phiMH2K (Bacteriophage phiMH2K) protein is DNA binding protein VP8.